An 803-amino-acid chain; its full sequence is Phenylalanine--tRNA ligase beta subunit (803 aa).

Residues 39–151 enclose the tRNA-binding domain; that stretch reads SMKFSGIKIG…KNAIIGEDIK (113 aa). Residues 406 to 482 enclose the B5 domain; that stretch reads PKKILIKLYK…RFYGFEKIPI (77 aa). The Mg(2+) site is built by Asp466 and Asp470. Positions 707 to 800 constitute an FDX-ACB domain; that stretch reads SDIPFNYRDI…LKKNFLIEIR (94 aa).

The protein belongs to the phenylalanyl-tRNA synthetase beta subunit family. Type 1 subfamily. Tetramer of two alpha and two beta subunits. Mg(2+) is required as a cofactor.

It localises to the cytoplasm. The enzyme catalyses tRNA(Phe) + L-phenylalanine + ATP = L-phenylalanyl-tRNA(Phe) + AMP + diphosphate + H(+). The polypeptide is Phenylalanine--tRNA ligase beta subunit (Wigglesworthia glossinidia brevipalpis).